A 307-amino-acid chain; its full sequence is Protein phosphatase PTC7 homolog fig (307 aa).

Positions 41 to 300 (VQGSSKDQQL…DDITVILASV (260 aa)) constitute a PPM-type phosphatase domain. Positions 77, 78, and 222 each coordinate Mn(2+).

It belongs to the PP2C family. Mg(2+) serves as cofactor. Mn(2+) is required as a cofactor.

The catalysed reaction is O-phospho-L-seryl-[protein] + H2O = L-seryl-[protein] + phosphate. It carries out the reaction O-phospho-L-threonyl-[protein] + H2O = L-threonyl-[protein] + phosphate. The protein is Protein phosphatase PTC7 homolog fig of Drosophila grimshawi (Hawaiian fruit fly).